The sequence spans 463 residues: Chromosomal replication initiator protein DnaA (463 aa).

The segment at 1 to 83 (MSTNQIILTD…LQLFQHYNNT (83 aa)) is domain I, interacts with DnaA modulators. Residues 83–124 (TIKSIEIITKELPGTTQTVTELPTKTFADIGSSELNSENIFS) form a domain II region. Residues 125–343 (TLDVRFTFDN…GALNKVIAHS (219 aa)) are domain III, AAA+ region. The ATP site is built by Gly-171, Gly-173, Lys-174, and Thr-175. Positions 344 to 463 (NFTLKEITLE…IHLLMKILQN (120 aa)) are domain IV, binds dsDNA.

This sequence belongs to the DnaA family. Oligomerizes as a right-handed, spiral filament on DNA at oriC.

Its subcellular location is the cytoplasm. Its function is as follows. Plays an essential role in the initiation and regulation of chromosomal replication. ATP-DnaA binds to the origin of replication (oriC) to initiate formation of the DNA replication initiation complex once per cell cycle. Binds the DnaA box (a 9 base pair repeat at the origin) and separates the double-stranded (ds)DNA. Forms a right-handed helical filament on oriC DNA; dsDNA binds to the exterior of the filament while single-stranded (ss)DNA is stabiized in the filament's interior. The ATP-DnaA-oriC complex binds and stabilizes one strand of the AT-rich DNA unwinding element (DUE), permitting loading of DNA polymerase. After initiation quickly degrades to an ADP-DnaA complex that is not apt for DNA replication. Binds acidic phospholipids. The chain is Chromosomal replication initiator protein DnaA from Rickettsia africae (strain ESF-5).